The chain runs to 630 residues: L-amino-acid oxidase (630 aa).

The first 21 residues, 1–21 (MAGLALRLVLAATLLGLAGSL), serve as a signal peptide directing secretion. Cysteines 35 and 198 form a disulfide. Residue asparagine 53 is glycosylated (N-linked (GlcNAc...) asparagine). Residues 68-69 (VA), 88-89 (EA), arginine 96, and 112-115 (GAMR) each bind FAD. A substrate-binding site is contributed by arginine 115. Residues asparagine 133 and asparagine 219 are each glycosylated (N-linked (GlcNAc...) asparagine). Valine 286 lines the FAD pocket. Residue tyrosine 395 coordinates substrate. FAD-binding positions include glutamate 479 and 486–491 (GWVETA). 486–487 (GW) serves as a coordination point for substrate. Residues 532-554 (GERPEEQQAREEVSPDEQEPSHK) form a disordered region.

Belongs to the flavin monoamine oxidase family. FIG1 subfamily. Requires FAD as cofactor. Primarily found in immune tissues. As to expression, primarily found in immune tissues, mostly in B-lymphocytes. In terms of tissue distribution, restricted to the testis, predominantly in Sertoli cells at the periphery of the ducts, and the brain, including Purkinje cells, hippocampus and mitral cells in the olfactory bulb. No isoform 2 expression in fetal tissues.

Its subcellular location is the secreted. The protein resides in the cytoplasmic vesicle. It is found in the secretory vesicle. The protein localises to the acrosome. It localises to the lysosome. It carries out the reaction an L-alpha-amino acid + O2 + H2O = a 2-oxocarboxylate + H2O2 + NH4(+). The catalysed reaction is L-tryptophan + O2 + H2O = indole-3-pyruvate + H2O2 + NH4(+). The enzyme catalyses L-phenylalanine + O2 + H2O = 3-phenylpyruvate + H2O2 + NH4(+). It catalyses the reaction L-tyrosine + O2 + H2O = 3-(4-hydroxyphenyl)pyruvate + H2O2 + NH4(+). It carries out the reaction L-arginine + O2 + H2O = 5-guanidino-2-oxopentanoate + H2O2 + NH4(+). It functions in the pathway amino-acid degradation; L-tryptophan degradation via pyruvate pathway. In terms of biological role, secreted L-amino-acid oxidase that acts as a key immunoregulator. Has preference for L-aromatic amino acids: converts phenylalanine (Phe), tyrosine (Tyr) and tryptophan (Trp) to phenylpyruvic acid (PP), hydroxyphenylpyruvic acid (HPP), and indole-3-pyruvic acid (I3P), respectively. Also has weak L-arginine oxidase activity. Acts as a negative regulator of anti-tumor immunity by mediating Trp degradation via an indole pyruvate pathway that activates the transcription factor AHR. IL4I1-mediated Trp catabolism generates I3P, giving rise to indole metabolites (indole-3-acetic acid (IAA) and indole-3-aldehyde (I3A)) and kynurenic acid, which act as ligands for AHR, a ligand-activated transcription factor that plays important roles in immunity and cancer. AHR activation by indoles following IL4I1-mediated Trp degradation enhances tumor progression by promoting cancer cell motility and suppressing adaptive immunity. Also has an immunoregulatory function in some immune cell, probably by mediating Trp degradation and promoting downstream AHR activation: inhibits T-cell activation and proliferation, promotes the differentiation of naive CD4(+) T-cells into FOXP3(+) regulatory T-cells (Treg) and regulates the development and function of B-cells. Also regulates M2 macrophage polarization by inhibiting T-cell activation. Also has antibacterial properties by inhibiting growth of Gram negative and Gram positive bacteria through the production of NH4(+) and H2O2. The sequence is that of L-amino-acid oxidase from Mus musculus (Mouse).